A 91-amino-acid chain; its full sequence is Small ribosomal subunit protein uS19 (91 aa).

Belongs to the universal ribosomal protein uS19 family.

Protein S19 forms a complex with S13 that binds strongly to the 16S ribosomal RNA. The chain is Small ribosomal subunit protein uS19 from Prochlorococcus marinus subsp. pastoris (strain CCMP1986 / NIES-2087 / MED4).